Here is a 195-residue protein sequence, read N- to C-terminus: Dephospho-CoA kinase (195 aa).

Residues 3-195 (IIGLTGSIAM…FSIIENLLKN (193 aa)) enclose the DPCK domain. Residue 11–16 (AMGKST) participates in ATP binding.

It belongs to the CoaE family.

Its subcellular location is the cytoplasm. It carries out the reaction 3'-dephospho-CoA + ATP = ADP + CoA + H(+). It functions in the pathway cofactor biosynthesis; coenzyme A biosynthesis; CoA from (R)-pantothenate: step 5/5. In terms of biological role, catalyzes the phosphorylation of the 3'-hydroxyl group of dephosphocoenzyme A to form coenzyme A. This Bartonella quintana (strain Toulouse) (Rochalimaea quintana) protein is Dephospho-CoA kinase.